Consider the following 445-residue polypeptide: FAD-dependent monooxygenase sorC (445 aa).

The chain crosses the membrane as a helical span at residues 8-28 (PFEVAIVGGGITGLALAVGLL). A glycan (N-linked (GlcNAc...) asparagine) is linked at Asn-31. The FAD site is built by Glu-38 and Arg-119. The active site involves Arg-201. 2 residues coordinate FAD: Asp-323 and Ala-336. An N-linked (GlcNAc...) asparagine glycan is attached at Asn-358.

Belongs to the paxM FAD-dependent monooxygenase family. The cofactor is FAD.

It localises to the membrane. It participates in secondary metabolite biosynthesis. Its function is as follows. FAD-dependent monooxygenase; part of the gene cluster that mediates the biosynthesis of sorbicillinoids, a diverse group of yellow secondary metabolites that restrict growth of competing pathogenic fungi but not of bacteria. Sorbicillinoids biosynthesis requires the action of two PKSs. SorA iteratively combines three acetyl units and the growing chain is modified by the ketoacyl reductase subunit, and optional by the enoyl reductase subunit in the second cycle. The polyketide is then handed over to the PKS SorB, which adds three more acetyl units, and two methyl groups. SorB releases an aldehyde, which undergoes spontaneous cyclization resulting in the formation of sorbicillin or 2',3'-dihydrosorbicillin. The monooxygenase sorC oxidizes sorbicillin and 2',3'-dihydrosorbicillin to 2',3'-dihydrosorbicillinol and sorbicillinol, respectively. The oxidoreductase sorD further converts sorbicillinol into oxosorbicillinol. Sorbicillinol is the building block for the other sorbicillinoids such as disorbicillinol, bisvertinolon, and dihydrobisvertinolone. The protein is FAD-dependent monooxygenase sorC of Penicillium rubens (strain ATCC 28089 / DSM 1075 / NRRL 1951 / Wisconsin 54-1255) (Penicillium chrysogenum).